We begin with the raw amino-acid sequence, 382 residues long: Protein NASP homolog 1 (382 aa).

Positions 1–39 are disordered; the sequence is MDTENIADASDIRVKDASGDSDEKGNGTTTEEETVEQKE. Positions 10–25 are enriched in basic and acidic residues; sequence SDIRVKDASGDSDEKG. The stretch at 42–75 is one TPR 1 repeat; sequence LAELLAAGRRALKVNDIDKASDSLSEATELSSEI. Basic and acidic residues predominate over residues 103-112; sequence QLLKGPGEKE. The interval 103–151 is disordered; it reads QLLKGPGEKESGDEEQAGNSDDKTDEENGETEKEDGEESGEEEDDDDDT. The span at 125–150 shows a compositional bias: acidic residues; that stretch reads KTDEENGETEKEDGEESGEEEDDDDD. 2 TPR repeats span residues 191–224 and 233–266; these read ADVL…QRNV and AQTY…LIAR. Residues 264–304 are a coiled coil; it reads IARQTELKHELERGVDDKEKKSEFENELKELEEMMPGVEEM. The interval 337–382 is disordered; it reads PQEAGDQKEANDISSLVRRPAKRAVDAPTDNQAVKKEKEEEGTTSI. Basic and acidic residues predominate over residues 369–382; sequence AVKKEKEEEGTTSI.

The protein belongs to the NASP family. In terms of assembly, may interact with zinc finger protein tra-4 and histone deacetylase hda-1.

Its subcellular location is the nucleus. Functionally, promotes normal hermaphrodite (XX) development, in concert with zinc finger protein tra-4 and histone deacetylase hda-1, perhaps as components of a complex. May act redundantly with nasp-2. Involved in innate immune response to B.thuringiensis strain DB27 and S.aureus bacteria. May play a role in the uptake or spreading of dsRNA. This chain is Protein NASP homolog 1, found in Caenorhabditis elegans.